Here is a 907-residue protein sequence, read N- to C-terminus: MFGKLLTKIFGSRNDRTLKTLGKIVTKINALEADFEKFSDEELKAKTAEFKQRLESGQTLDDVMPEAFAVVREASKRVFEMRHFDVQLLGGMVLDSNRIAEMRTGEGKTLTATLPAYLNALTGKGVHVITVNDYLARRDAENNRPLFEFLGMTVGVNIAGMGQAEKKMAYASDITYGTNNEFGFDYLRDNMAFSPNERVQRPLHYALIDEVDSILIDEARTPLIISGAAEDSSELYIKINTLIPHLIRQDKEDTEEEIGDGDYSIDEKAKQVHMTERGQEKVEVLLTERGMLAEGDSLYSAANISLLHHVNAALRAHTLFEKDVDYIVQDNEVIIVDEHTGRTMPGRRWSEGLHQAVEAKEGVHIQNENQTLASITFQNFFRQYEKLAGMTGTADTEAFEFQHIYGLDTVVIPTNRPMVRKDHADLVYLTAEEKYDAIIKDIIDCRDRGQPVLVGTVSIEQSELLHSMLKKAKIPHEVLNAKFHEREAEIVAQAGRSGAVTIATNMAGRGTDIVLGGNWNMEIDALENPTAEQKAKIKADWQVRHDEVVAAGGLHILGTERHESRRIDNQLRGRSGRQGDAGSSRFYLSMEDSLMRIFASERVSSMMKKLGMEKGEAIEHPWVSRAIENAQRKVEARNFDIRKQLLEFDDVANDQRQVVYAQRNELMDAESIQDTIVNIQADVVNGLIDQYIPPQSVEELWDIAGLETRLEQEYALRMPVQEWLDKEDDLHEETLRERIVEIWVKAYKAKEEMVGAQVLRQFEKAVMLQTLDGLWKEHLAAMDHLRQGIHLRGYAQKNPKQEYKRESFELFQQMLESLKHDVISILSKVQVQAQSDVEEMEERRRQEEAKVRRDYQHAEAEALVGAEEAQALAATQPVVREGEKVGRNDPCPCGSGRKYKQCHGKLS.

ATP contacts are provided by residues Gln87, 105-109 (GEGKT), and Asp512. The Zn(2+) site is built by Cys891, Cys893, Cys902, and His903.

Belongs to the SecA family. Monomer and homodimer. Part of the essential Sec protein translocation apparatus which comprises SecA, SecYEG and auxiliary proteins SecDF-YajC and YidC. It depends on Zn(2+) as a cofactor.

The protein localises to the cell inner membrane. Its subcellular location is the cytoplasm. It catalyses the reaction ATP + H2O + cellular proteinSide 1 = ADP + phosphate + cellular proteinSide 2.. Its function is as follows. Part of the Sec protein translocase complex. Interacts with the SecYEG preprotein conducting channel. Has a central role in coupling the hydrolysis of ATP to the transfer of proteins into and across the cell membrane, serving both as a receptor for the preprotein-SecB complex and as an ATP-driven molecular motor driving the stepwise translocation of polypeptide chains across the membrane. This is Protein translocase subunit SecA from Shewanella loihica (strain ATCC BAA-1088 / PV-4).